The chain runs to 51 residues: Sperm protamine P1 (51 aa).

This sequence belongs to the protamine P1 family. Cross-linked by interchain disulfide bonds around the DNA-helix. Testis.

It is found in the nucleus. The protein localises to the chromosome. In terms of biological role, protamines substitute for histones in the chromatin of sperm during the haploid phase of spermatogenesis. They compact sperm DNA into a highly condensed, stable and inactive complex. This chain is Sperm protamine P1 (PRM1), found in Pongo pygmaeus (Bornean orangutan).